A 326-amino-acid polypeptide reads, in one-letter code: N-acetyl-gamma-glutamyl-phosphate reductase (326 aa).

Cysteine 155 is an active-site residue.

Belongs to the NAGSA dehydrogenase family. Type 1 subfamily.

The protein resides in the cytoplasm. The catalysed reaction is N-acetyl-L-glutamate 5-semialdehyde + phosphate + NADP(+) = N-acetyl-L-glutamyl 5-phosphate + NADPH + H(+). The protein operates within amino-acid biosynthesis; L-arginine biosynthesis; N(2)-acetyl-L-ornithine from L-glutamate: step 3/4. In terms of biological role, catalyzes the NADPH-dependent reduction of N-acetyl-5-glutamyl phosphate to yield N-acetyl-L-glutamate 5-semialdehyde. The polypeptide is N-acetyl-gamma-glutamyl-phosphate reductase (Shewanella sp. (strain MR-4)).